The primary structure comprises 261 residues: Expansin-B2 (261 aa).

The N-terminal stretch at 1–24 (MAGASAKVVAMLLSVLATYGFAAG) is a signal peptide. The Expansin-like EG45 domain maps to 51–157 (GGACGFKNTN…RRVPCYHRGL (107 aa)). Intrachain disulfides connect Cys-54–Cys-82, Cys-85–Cys-152, and Cys-90–Cys-96. The region spanning 170–256 (VYLAVLVEFA…NWRANTNYGS (87 aa)) is the Expansin-like CBD domain.

The protein belongs to the expansin family. Expansin B subfamily. In terms of tissue distribution, expressed in roots.

It is found in the secreted. The protein resides in the cell wall. It localises to the membrane. May cause loosening and extension of plant cell walls by disrupting non-covalent bonding between cellulose microfibrils and matrix glucans. No enzymatic activity has been found. May be required for rapid internodal elongation in deepwater rice during submergence. The protein is Expansin-B2 (EXPB2) of Oryza sativa subsp. japonica (Rice).